A 94-amino-acid polypeptide reads, in one-letter code: Sapecin (94 aa).

A signal peptide spans 1–23 (MKSFIVLAVTLCLAAFFMGQSVA). Positions 24–54 (SPAAAAEESKFVDGLHALKTIEPELHGRYKR) are excised as a propeptide. 3 disulfides stabilise this stretch: Cys57-Cys84, Cys70-Cys90, and Cys74-Cys92.

This sequence belongs to the invertebrate defensin family. Type 1 subfamily. As to expression, hemocytes and fat body.

It is found in the secreted. In terms of biological role, sapecins, which are potent bactericidal proteins, are produced in response to injury. Sapecin is cytotoxic to Gram-positive bacteria, and to a lesser extent against Gram-negative bacteria. This Sarcophaga peregrina (Flesh fly) protein is Sapecin.